The following is a 510-amino-acid chain: Protein fork head (510 aa).

2 disordered regions span residues 1–62 (MQKL…SPLA) and 175–205 (AMPP…YRRS). A compositionally biased stretch (gly residues) spans 20 to 39 (SGGGGPPSGGGGGGGGGGGG). Low complexity predominate over residues 47–60 (NNPNPTSNGGSMSP). Residues Ser187 and Ser190 each carry the phosphoserine modification. A DNA-binding region (fork-head) is located at residues 209-300 (AKPPYSYISL…GNMFENGCYL (92 aa)). The interval 309 to 359 (EKKEAIRQLHKSPSHSSLEATSPGKKDHEDSHHMHHHHHSRLDHHQHHKEA) is disordered. 3 positions are modified to phosphoserine: Ser320, Ser322, and Ser330. The segment covering 341 to 356 (HMHHHHHSRLDHHQHH) has biased composition (basic residues).

The protein resides in the nucleus. Fkh promotes terminal as opposed to segmental development. In the absence of fkh, this developmental switch does not occur. The nuclear localization of the fkh protein suggest that fkh regulates the transcription of other, subordinate, genes. This chain is Protein fork head (fkh), found in Drosophila melanogaster (Fruit fly).